The following is a 96-amino-acid chain: Co-chaperonin GroES (96 aa).

The protein belongs to the GroES chaperonin family. As to quaternary structure, heptamer of 7 subunits arranged in a ring. Interacts with the chaperonin GroEL.

Its subcellular location is the cytoplasm. Functionally, together with the chaperonin GroEL, plays an essential role in assisting protein folding. The GroEL-GroES system forms a nano-cage that allows encapsulation of the non-native substrate proteins and provides a physical environment optimized to promote and accelerate protein folding. GroES binds to the apical surface of the GroEL ring, thereby capping the opening of the GroEL channel. This is Co-chaperonin GroES from Pelagibacter ubique (strain HTCC1062).